The primary structure comprises 443 residues: Probable glycine dehydrogenase (decarboxylating) subunit 1 (443 aa).

The protein belongs to the GcvP family. N-terminal subunit subfamily. As to quaternary structure, the glycine cleavage system is composed of four proteins: P, T, L and H. In this organism, the P 'protein' is a heterodimer of two subunits.

It carries out the reaction N(6)-[(R)-lipoyl]-L-lysyl-[glycine-cleavage complex H protein] + glycine + H(+) = N(6)-[(R)-S(8)-aminomethyldihydrolipoyl]-L-lysyl-[glycine-cleavage complex H protein] + CO2. In terms of biological role, the glycine cleavage system catalyzes the degradation of glycine. The P protein binds the alpha-amino group of glycine through its pyridoxal phosphate cofactor; CO(2) is released and the remaining methylamine moiety is then transferred to the lipoamide cofactor of the H protein. This is Probable glycine dehydrogenase (decarboxylating) subunit 1 from Solidesulfovibrio magneticus (strain ATCC 700980 / DSM 13731 / RS-1) (Desulfovibrio magneticus).